The primary structure comprises 79 residues: Small polypeptide DEVIL 8 (79 aa).

The span at 1 to 12 (MSRLRNSAQLQL) shows a compositional bias: polar residues. A disordered region spans residues 1–37 (MSRLRNSAQLQLSKKESLGDNGGALNTTRSSRQKQGK). N-linked (GlcNAc...) asparagine glycosylation is present at N26. The tract at residues 39–70 (GFTRKCGRLVKEQRARFYIMRRCVVMLICWTD) is required for DVL/RTFL small polypeptide activity. Residues 55 to 71 (FYIMRRCVVMLICWTDH) form a helical membrane-spanning segment. An N-linked (GlcNAc...) asparagine glycan is attached at N74.

The protein belongs to the DVL/RTFL small polypeptides family.

It is found in the cell membrane. Functionally, small polypeptide acting as a regulatory molecule which coordinates cellular responses required for differentiation, growth and development, probably by restricting polar cell proliferation in lateral organs and coordinating socket cell recruitment and differentiation at trichome sites. The chain is Small polypeptide DEVIL 8 from Arabidopsis thaliana (Mouse-ear cress).